We begin with the raw amino-acid sequence, 230 residues long: Orotidine 5'-phosphate decarboxylase (230 aa).

Substrate is bound by residues aspartate 11, lysine 34, 61–70 (DLKLHDIPNT), threonine 117, arginine 179, glutamine 188, glycine 208, and arginine 209. Lysine 63 acts as the Proton donor in catalysis.

Belongs to the OMP decarboxylase family. Type 1 subfamily. In terms of assembly, homodimer.

It carries out the reaction orotidine 5'-phosphate + H(+) = UMP + CO2. The protein operates within pyrimidine metabolism; UMP biosynthesis via de novo pathway; UMP from orotate: step 2/2. Catalyzes the decarboxylation of orotidine 5'-monophosphate (OMP) to uridine 5'-monophosphate (UMP). The polypeptide is Orotidine 5'-phosphate decarboxylase (Streptococcus equi subsp. zooepidemicus (strain MGCS10565)).